A 91-amino-acid chain; its full sequence is MNFFGIGLPEMLVILAIALLVFGPKKLPEIGRSLGKALRGFQDASREFESEIKREIDRTPATPAEATVEPPVLDSAPTEAVTVEKQTETQV.

A helical membrane pass occupies residues 3–23 (FFGIGLPEMLVILAIALLVFG). The segment at 57 to 91 (DRTPATPAEATVEPPVLDSAPTEAVTVEKQTETQV) is disordered. Positions 59-72 (TPATPAEATVEPPV) are enriched in low complexity.

This sequence belongs to the TatA/E family. Forms a complex with TatC.

The protein localises to the cell inner membrane. Part of the twin-arginine translocation (Tat) system that transports large folded proteins containing a characteristic twin-arginine motif in their signal peptide across membranes. TatA could form the protein-conducting channel of the Tat system. This chain is Sec-independent protein translocase protein TatA, found in Synechococcus elongatus (strain ATCC 33912 / PCC 7942 / FACHB-805) (Anacystis nidulans R2).